The primary structure comprises 483 residues: (R)-mandelonitrile beta-glucosyltransferase (483 aa).

The Proton acceptor role is filled by His-22. His-22 contributes to the an anthocyanidin binding site. Asp-124 (charge relay) is an active-site residue. Residues Thr-146, Gln-363, His-378, Trp-381, Asn-382, Ser-383, and Glu-386 each coordinate UDP-alpha-D-glucose. Ala-401 serves as a coordination point for an anthocyanidin. Residues Glu-402 and Gln-403 each coordinate UDP-alpha-D-glucose.

This sequence belongs to the UDP-glycosyltransferase family.

It catalyses the reaction (R)-mandelonitrile + UDP-alpha-D-glucose = (R)-prunasin + UDP + H(+). Involved in the biosynthesis of the cyanogenic glycoside (R)-prunasin, a precursor of (R)-amygdalin, which at high concentrations is associated with intense bitterness in kernels of almond. Stereo-selectively glucosylates (R)-mandelonitrile to produce (R)-prunasin. The chain is (R)-mandelonitrile beta-glucosyltransferase from Prunus dulcis (Almond).